The chain runs to 508 residues: MENQKKNNFNQIDYFRWADYSKNNNNNNNNNNNNNINNNNNNNNNNNINNNIDNNNSFYRFISPPFNKINNNNNANNFNNINNNNNNNFNNYQLNDGNKISINNILNDNTTTTNTSANQNSANTNKTYNFSKNENGIVYEIDNFILDSNLVREQPFNNFNYLNIINNIQNFLQLISGKVNLLNVILGILVDDVNRYSVNPNSMSIIPSDNFPTPQLPLETNTDLNNTSDCSSTTFSSPPSSAFNSPNLQNDYTQPQNQKSQSSTIVKKNSSKSKSKNNKQSKDDGETNDGESPEIEEKRVIRLDMNLNPNPTIPKRGRPLKVRPFECSICKIKCSIYWRRILINEVRTSVCNACGLRTMKKTKKENIEKKKNKISNILNDHNSEIDNQIIIYLNQKKTTTTTTTTTTSSTNNLNNNNNNNNNNNNNNNNNNNNNNNNNNNDNNNNDNNNNDNNNNDNNNNNNNNNNNNNNNNNNNNNDNYNDSIYSRLYSDDYEDEYYEGEEYENEDE.

Disordered stretches follow at residues 20-51 (YSKNNNNNNNNNNNNNINNNNNNNNNNNINNN) and 203-296 (MSII…PEIE). Residues 23 to 51 (NNNNNNNNNNNNNINNNNNNNNNNNINNN) are compositionally biased toward low complexity. A compositionally biased stretch (polar residues) spans 203–224 (MSIIPSDNFPTPQLPLETNTDL). Over residues 225 to 247 (NNTSDCSSTTFSSPPSSAFNSPN) the composition is skewed to low complexity. A compositionally biased stretch (polar residues) spans 248-266 (LQNDYTQPQNQKSQSSTIV). The segment covering 269-279 (NSSKSKSKNNK) has biased composition (basic residues). Residues 327–354 (CSICKIKCSIYWRRILINEVRTSVCNAC) form a GATA-type zinc finger. Residues 356–433 (LRTMKKTKKE…NNNNNNNNNN (78 aa)) adopt a coiled-coil conformation. Positions 399–482 (TTTTTTTTTS…NNNNNDNYND (84 aa)) are enriched in low complexity. The disordered stretch occupies residues 399 to 484 (TTTTTTTTTS…NNNDNYNDSI (86 aa)).

This is GATA zinc finger domain-containing protein 13 (gtaM) from Dictyostelium discoideum (Social amoeba).